Reading from the N-terminus, the 183-residue chain is Putative calmodulin-like protein 2 (183 aa).

EF-hand domains are found at residues 7–42, 43–78, 80–115, and 116–151; these read EQIA…LGQS, PTEA…KLRD, GAED…LGDP, and LSDD…KRRQ. D20, D22, D24, T26, E31, D56, D58, S60, S62, E67, D93, D95, N97, E104, D129, D131, D133, Q135, and E140 together coordinate Ca(2+). Positions 154 to 183 are disordered; sequence MEGHGSGGHRSSNSHKKSGCCGPNSSCTIL. Residues C173 and C174 are each lipidated (S-palmitoyl cysteine). C180 carries the cysteine methyl ester modification. C180 carries the S-farnesyl cysteine lipid modification. Positions 181–183 are cleaved as a propeptide — removed in mature form; sequence TIL.

Belongs to the calmodulin family.

Its subcellular location is the membrane. Functionally, potential calcium sensor. The sequence is that of Putative calmodulin-like protein 2 (CML2) from Oryza sativa subsp. japonica (Rice).